Consider the following 1030-residue polypeptide: Isoleucine--tRNA ligase 2 (1030 aa).

Positions 48–58 (PFATGLPHYGH) match the 'HIGH' region motif. A 'KMSKS' region motif is present at residues 589 to 593 (KMSKR). Lys592 serves as a coordination point for ATP.

It belongs to the class-I aminoacyl-tRNA synthetase family. IleS type 2 subfamily. As to quaternary structure, monomer. Requires Zn(2+) as cofactor.

It is found in the cytoplasm. The catalysed reaction is tRNA(Ile) + L-isoleucine + ATP = L-isoleucyl-tRNA(Ile) + AMP + diphosphate. Catalyzes the attachment of isoleucine to tRNA(Ile). As IleRS can inadvertently accommodate and process structurally similar amino acids such as valine, to avoid such errors it has two additional distinct tRNA(Ile)-dependent editing activities. One activity is designated as 'pretransfer' editing and involves the hydrolysis of activated Val-AMP. The other activity is designated 'posttransfer' editing and involves deacylation of mischarged Val-tRNA(Ile). Functionally, confers high-level resistance to the antibiotic mupirocin (pseudomonic acid A), an Ile-analog produced by P.fluorescens NCIMB 10586 itself that competitively inhibits activation by Ile-tRNA synthetase, thus inhibiting protein biosynthesis. In Pseudomonas fluorescens, this protein is Isoleucine--tRNA ligase 2 (ileS2).